Consider the following 152-residue polypeptide: UPF0260 protein BAB1_1496 (152 aa).

Belongs to the UPF0260 family.

The chain is UPF0260 protein BAB1_1496 from Brucella abortus (strain 2308).